The chain runs to 506 residues: Steroid (22S)-hydroxylase (506 aa).

The chain crosses the membrane as a helical span at residues 12–32 (LLFFLPFILLALLTFYTTTVA). Cys-449 is a heme binding site.

The protein belongs to the cytochrome P450 family. Heme is required as a cofactor. As to expression, highly expressed in roots and leaf blades. Expressed in shoot apex, stems, leaf sheaths, inflorescences and flowers.

Its subcellular location is the membrane. It carries out the reaction a C28-steroid + reduced [NADPH--hemoprotein reductase] + O2 = a (22S)-22-hydroxy C28-steroid + oxidized [NADPH--hemoprotein reductase] + H2O + H(+). It catalyses the reaction campesterol + reduced [NADPH--hemoprotein reductase] + O2 = (22S)-22-hydroxycampesterol + oxidized [NADPH--hemoprotein reductase] + H2O + H(+). The catalysed reaction is campestanol + reduced [NADPH--hemoprotein reductase] + O2 = 6-deoxycathasterone + oxidized [NADPH--hemoprotein reductase] + H2O + H(+). Its pathway is plant hormone biosynthesis; brassinosteroid biosynthesis. Its function is as follows. Catalyzes the C22-alpha-hydroxylation step in brassinosteroid biosynthesis, which is the rate-limiting step in this biosynthetic pathway. Catalyzes the conversion of campesterol (CR) to (22S)-22-hydroxycampesterol (22-OHCR, 22-hydroxyCR) and of campestanol (CN) to 6-deoxycathasterone (6-deoxoCT). Required for auxin responses involved in the regulation of epidermal cells length of the lamina joint. The protein is Steroid (22S)-hydroxylase of Oryza sativa subsp. japonica (Rice).